We begin with the raw amino-acid sequence, 120 residues long: Large ribosomal subunit protein uL18 (120 aa).

The protein belongs to the universal ribosomal protein uL18 family. Part of the 50S ribosomal subunit; part of the 5S rRNA/L5/L18/L25 subcomplex. Contacts the 5S and 23S rRNAs.

This is one of the proteins that bind and probably mediate the attachment of the 5S RNA into the large ribosomal subunit, where it forms part of the central protuberance. In Chloroflexus aggregans (strain MD-66 / DSM 9485), this protein is Large ribosomal subunit protein uL18.